The following is a 1163-amino-acid chain: DNA-directed RNA polymerase subunit beta 2 (1163 aa).

Belongs to the RNA polymerase beta chain family. As to quaternary structure, the RNAP catalytic core consists of 2 alpha, 1 beta, 1 beta' and 1 omega subunit. When a sigma factor is associated with the core the holoenzyme is formed, which can initiate transcription.

It catalyses the reaction RNA(n) + a ribonucleoside 5'-triphosphate = RNA(n+1) + diphosphate. DNA-dependent RNA polymerase catalyzes the transcription of DNA into RNA using the four ribonucleoside triphosphates as substrates. In Nocardia farcinica (strain IFM 10152), this protein is DNA-directed RNA polymerase subunit beta 2.